The primary structure comprises 554 residues: Probable oligo-1,6-glucosidase 3 (554 aa).

The Nucleophile role is filled by aspartate 199. Glutamate 256 acts as the Proton donor in catalysis.

It belongs to the glycosyl hydrolase 13 family.

The protein resides in the cytoplasm. It catalyses the reaction Hydrolysis of (1-&gt;6)-alpha-D-glucosidic linkages in some oligosaccharides produced from starch and glycogen by alpha-amylase, and in isomaltose.. The polypeptide is Probable oligo-1,6-glucosidase 3 (yugT) (Bacillus subtilis (strain 168)).